Here is a 99-residue protein sequence, read N- to C-terminus: Large ribosomal subunit protein eL21 (99 aa).

This sequence belongs to the eukaryotic ribosomal protein eL21 family.

This Pyrobaculum calidifontis (strain DSM 21063 / JCM 11548 / VA1) protein is Large ribosomal subunit protein eL21.